Consider the following 496-residue polypeptide: Cytochrome P450 monooxygenase claT (496 aa).

A helical transmembrane segment spans residues 2 to 22 (LSLIVEATLLLVVLVLSAHYV). Cys423 is a binding site for heme.

It belongs to the cytochrome P450 family. It depends on heme as a cofactor.

It localises to the membrane. It catalyses the reaction wigandol + 4 reduced [NADPH--hemoprotein reductase] + 4 O2 = arnebinol A + 4 oxidized [NADPH--hemoprotein reductase] + 6 H2O + 4 H(+). The catalysed reaction is arnebinol A + reduced [NADPH--hemoprotein reductase] + O2 = clavilactone A + oxidized [NADPH--hemoprotein reductase] + H2O + H(+). The enzyme catalyses (2E)-geranylhydroquinone + reduced [NADPH--hemoprotein reductase] + O2 = isoalliodorol + oxidized [NADPH--hemoprotein reductase] + H2O + H(+). Its pathway is secondary metabolite biosynthesis; terpenoid biosynthesis. Functionally, cytochrome P450 monooxygenase; part of the gene cluster that mediates the biosynthesis of clavilactone A, a meroterpenoid that features a unique benzo-fused ten-membered carbocyclic ring unit with an alpha,beta-epoxy-gamma-lactone moiety, forming an intriguing 10/5/3 tricyclic nested skeleton. ClaR, ClaS and ClaT are sufficient to produce clavilactone A. Within the pathway, claT acts as a multifunctional cytochrome P450 monooxygenase that catalyzes a ten-electron oxidation to accomplish the biosynthesis of the 10/5/3 tricyclic nested skeleton in clavilactones. The biosynthesis begins with the prenyltransferase claS that transfers geranyl pyrophosphate (GPP) to hydroquinone to produces geranylhydroquinone. The cytochrome P450 monooxygenase claR then catalyzes the diradical coupling reaction between the intramolecular hydroquinone and allyl moieties to form the benzo-fused ten-membered carbocyclic ring unit of wigantol. Finally the cytochrome P450 monooxygenase claT exquisitely and stereoselectively assembles the alpha,beta-epoxy-gamma-lactone moiety, producing clavilactone A via arnebinol A. The sequence is that of Cytochrome P450 monooxygenase claT from Ampulloclitocybe clavipes (Club foot).